The following is a 499-amino-acid chain: MPKIMIQGTASSVGKSIIVAALCRIFKQDGFKVCPYKSQNMSLNSYITLDGREMGRAQVLQAYASGLEPEVYMNPILLKPTTDKNCQVIIRGEVYCNSSAREYYNMKKEFVPMLKKDFEILEDKFDIVVIEGAGSPAEINLRDNDIVNMGLAEMVDSPVILVGDIDKGGVFASLLGTIMLLTEKEKSRVKGTIINKFRGDVDILKPGLSMIEEKIKVPSIGVIPYFRLALEDEDSAVDFNTKISAPIDIAIIKLPHISNFTDMDPLKIEEDVSLRYVTSADDFGNPDLLIIPGSKNTIEDLLYIRKVGIEDKIKKYSSRDGFIFGICGGYQMLGTYIEDPLGVETKVKAVEGMNILDVSTVFAKEKITTRVKGKVCGLTENIDIYGYEIHMGSCNYGKKAKPLVEITDKNGCSCNFKEGAINPGRNVMGTYIHGIFDGAELRQYIMNTLRSRRGIKHKNSKVYENLRDGEIDKLADIVRSSLDMKKVYEILNVKSKFME.

In terms of domain architecture, GATase cobBQ-type spans 246 to 441 (PIDIAIIKLP…IHGIFDGAEL (196 aa)). Cys-327 (nucleophile) is an active-site residue. His-433 is a catalytic residue.

Belongs to the CobB/CobQ family. CobQ subfamily.

The protein operates within cofactor biosynthesis; adenosylcobalamin biosynthesis. Functionally, catalyzes amidations at positions B, D, E, and G on adenosylcobyrinic A,C-diamide. NH(2) groups are provided by glutamine, and one molecule of ATP is hydrogenolyzed for each amidation. The polypeptide is Cobyric acid synthase (Clostridium kluyveri (strain NBRC 12016)).